The following is a 487-amino-acid chain: L-tartrate/succinate antiporter (487 aa).

14 consecutive transmembrane segments (helical) span residues 10–30 (YLAP…AGLE), 33–53 (TWLY…EPVP), 54–74 (GAVV…WLLF), 93–113 (WAVF…FMFG), 137–157 (TLFL…VTPS), 189–209 (IGSY…AIFL), 236–256 (FLGM…LAYV), 292–312 (LMVG…AAMV), 313–333 (GYSV…DIVS), 340–360 (VFFW…TGFI), 370–390 (SLSG…FYLL), 393–413 (FFAS…AAAL), 418–438 (IPLP…SILT), and 465–485 (IFGL…MPVV).

It belongs to the SLC13A/DASS transporter (TC 2.A.47) family. DIT1 subfamily.

Its subcellular location is the cell inner membrane. It carries out the reaction (2R,3R)-tartrate(out) + succinate(in) = (2R,3R)-tartrate(in) + succinate(out). Its function is as follows. Catalyzes the uptake of tartrate in exchange for intracellular succinate. Essential for anaerobic L-tartrate fermentation. This is L-tartrate/succinate antiporter (ttdT) from Shigella boydii serotype 4 (strain Sb227).